We begin with the raw amino-acid sequence, 443 residues long: Anamorsin homolog (443 aa).

The interval Leu-136 to Gly-301 is N-terminal SAM-like domain. The segment at Asn-302–Tyr-331 is linker. [2Fe-2S] cluster contacts are provided by Cys-341, Cys-348, Cys-351, and Cys-353. Positions Cys-341 to Cys-353 are fe-S binding site A. Residues Cys-380, Cys-383, Cys-391, and Cys-394 each contribute to the [4Fe-4S] cluster site. 2 consecutive short sequence motifs (cx2C motif) follow at residues Cys-380 to Cys-383 and Cys-391 to Cys-394. The interval Cys-380 to Cys-394 is fe-S binding site B.

Belongs to the anamorsin family. In terms of assembly, monomer. [2Fe-2S] cluster serves as cofactor. It depends on [4Fe-4S] cluster as a cofactor.

It localises to the cytoplasm. The protein resides in the mitochondrion intermembrane space. Its function is as follows. Component of the cytosolic iron-sulfur (Fe-S) protein assembly (CIA) machinery. Required for the maturation of extramitochondrial Fe-S proteins. Part of an electron transfer chain functioning in an early step of cytosolic Fe-S biogenesis, facilitating the de novo assembly of a [4Fe-4S] cluster on the cytosolic Fe-S scaffold complex. Electrons are transferred from NADPH via a FAD- and FMN-containing diflavin oxidoreductase. Together with the diflavin oxidoreductase, also required for the assembly of the diferric tyrosyl radical cofactor of ribonucleotide reductase (RNR), probably by providing electrons for reduction during radical cofactor maturation in the catalytic small subunit. In Toxoplasma gondii (strain ATCC 50861 / VEG), this protein is Anamorsin homolog.